The primary structure comprises 828 residues: Deubiquitinase MYSM1 (828 aa).

Residues 1-12 show a composition bias toward acidic residues; the sequence is MAAEEADVDIEG. The tract at residues 1 to 31 is disordered; that stretch reads MAAEEADVDIEGDVVAAAGAQPGSGENTASV. At Ser110 the chain carries Phosphoserine. The region spanning 116-167 is the SANT domain; sequence SYSVKWTIEEKELFEQGLAKFGRRWTKISKLIGSRTVLQVKSYARQYFKNKV. Lys187 participates in a covalent cross-link: Glycyl lysine isopeptide (Lys-Gly) (interchain with G-Cter in SUMO2). Ser218 carries the post-translational modification Phosphoserine. Thr236 is modified (phosphothreonine). A phosphoserine mark is found at Ser242, Ser267, and Ser340. One can recognise an SWIRM domain in the interval 372 to 470; the sequence is LKPPEQEIEI…FGCEQAVYNR (99 aa). Residues 577-709 enclose the MPN domain; that stretch reads VKVASEALLI…PLPYSQITCL (133 aa). Residues His656, His658, and Asp669 each contribute to the Zn(2+) site. Residues 656-669 carry the JAMM motif motif; the sequence is HSHPAFDPNPSLRD. An LXXLL motif motif is present at residues 774-778; that stretch reads LQKLL.

It belongs to the peptidase M67A family. MYSM1 subfamily. Component of a large chromatin remodeling complex, at least composed of MYSM1, PCAF, RBM10 and KIF11/TRIP5. Binds histones. Interacts with NFIL3; this interaction is critical for their correct recruitment to the ID2 locus during natural killer cell maturation.

Its subcellular location is the nucleus. The protein localises to the cytoplasm. Metalloprotease with deubiquitinase activity that plays important regulator roles in hematopoietic stem cell function, blood cell production and immune response. Participates in the normal programming of B-cell responses to antigen after the maturation process. Within the cytoplasm, plays critical roles in the repression of innate immunity and autoimmunity. Removes 'Lys-63'-linked polyubiquitins from TRAF3 and TRAF6 complexes. Attenuates NOD2-mediated inflammation and tissue injury by promoting 'Lys-63'-linked deubiquitination of RIPK2 component. Suppresses the CGAS-STING1 signaling pathway by cleaving STING1 'Lys-63'-linked ubiquitin chains. In the nucleus, acts as a hematopoietic transcription regulator derepressing a range of genes essential for normal stem cell differentiation including EBF1 and PAX5 in B-cells, ID2 in NK-cell progenitor or FLT3 in dendritic cell precursors. Deubiquitinates monoubiquitinated histone H2A, a specific tag for epigenetic transcriptional repression, leading to dissociation of histone H1 from the nucleosome. This Homo sapiens (Human) protein is Deubiquitinase MYSM1 (MYSM1).